Consider the following 304-residue polypeptide: N-carbamoyl-D-amino acid hydrolase (304 aa).

The CN hydrolase domain occupies 5 to 276 (MILAVGQQGP…DEVITAAVDL (272 aa)). Residues glutamate 47, lysine 127, and cysteine 172 contribute to the active site.

Homotetramer.

It carries out the reaction an N-carbamoyl-D-amino acid + H2O + 2 H(+) = a D-alpha-amino acid + NH4(+) + CO2. Its function is as follows. The enzyme catalyzes the hydrolysis of N-carbamoyl-D-amino acids to the corresponding which are useful intermediates in the preparation of beta-lactam antibiotics. Industrial production of beta-lactam antibiotics is now being developed using this enzyme. In Rhizobium radiobacter (Agrobacterium tumefaciens), this protein is N-carbamoyl-D-amino acid hydrolase.